Reading from the N-terminus, the 420-residue chain is Dynein axonemal assembly factor 4 (420 aa).

Positions 3-87 constitute a CS domain; it reads VRVSEFSWQQ…KEPVLWESLS (85 aa). The interval 7–103 is mediates interaction with ESR1 and STUB1; it reads EFSWQQTPAA…EMMQRIREKS (97 aa). The span at 165 to 192 shows a compositional bias: basic and acidic residues; the sequence is CQKKADGQKRVQRKEKPLQGKQAEERGA. Positions 165-212 are disordered; it reads CQKKADGQKRVQRKEKPLQGKQAEERGALKPQSLPRKAPPTRLPTRGR. TPR repeat units follow at residues 288-321, 323-355, and 364-397; these read PDWLKDKGNKLFATENYLAAIDAYNLAIRLNRKI, VLYLNRAACHLKLKNLHKAIEDSSKALELLTPP, and MKAHVRRGTAFCQLELYVEGLQDYEAALKIDPAN.

Interacts with ZMYND10. Interacts with STUB1. Interacts with ESR1 and ESR2. Interacts with DNAAF2. Interacts with CCT3, CCT4, CCT5 and CCT8. Interacts with DNAAF6/PIH1D3.

It is found in the nucleus. The protein resides in the cytoplasm. Its subcellular location is the cell projection. The protein localises to the neuron projection. It localises to the dynein axonemal particle. Functionally, involved in neuronal migration during development of the cerebral neocortex. May regulate the stability and proteasomal degradation of the estrogen receptors that play an important role in neuronal differentiation, survival and plasticity. Axonemal dynein assembly factor required for ciliary motility. The chain is Dynein axonemal assembly factor 4 from Rattus norvegicus (Rat).